We begin with the raw amino-acid sequence, 230 residues long: 2,3-bisphosphoglycerate-dependent phosphoglycerate mutase (230 aa).

Residues 8-15, 21-22, Arg60, 87-90, Lys98, 114-115, and 183-184 each bind substrate; these read RHGESEWN, TG, ERHY, RR, and GN. His9 functions as the Tele-phosphohistidine intermediate in the catalytic mechanism. Residue Glu87 is the Proton donor/acceptor of the active site.

The protein belongs to the phosphoglycerate mutase family. BPG-dependent PGAM subfamily.

The catalysed reaction is (2R)-2-phosphoglycerate = (2R)-3-phosphoglycerate. Its pathway is carbohydrate degradation; glycolysis; pyruvate from D-glyceraldehyde 3-phosphate: step 3/5. In terms of biological role, catalyzes the interconversion of 2-phosphoglycerate and 3-phosphoglycerate. The protein is 2,3-bisphosphoglycerate-dependent phosphoglycerate mutase of Streptococcus gordonii (strain Challis / ATCC 35105 / BCRC 15272 / CH1 / DL1 / V288).